Here is a 454-residue protein sequence, read N- to C-terminus: Bifunctional protein GlmU (454 aa).

Positions 1-226 (MSLNVVILAA…PIETEGANNR (226 aa)) are pyrophosphorylase. Residues 8–11 (LAAG), K22, Q73, 78–79 (GT), 100–102 (YGD), G137, E151, N166, and N224 each bind UDP-N-acetyl-alpha-D-glucosamine. D102 is a Mg(2+) binding site. N224 is a binding site for Mg(2+). The linker stretch occupies residues 227-247 (VQLAALERAYQARRAEELMLA). The tract at residues 248 to 454 (GANLRDPARI…GWQRPVKKPK (207 aa)) is N-acetyltransferase. Residues R330 and K348 each coordinate UDP-N-acetyl-alpha-D-glucosamine. The active-site Proton acceptor is H360. UDP-N-acetyl-alpha-D-glucosamine-binding residues include Y363 and N374. Acetyl-CoA-binding positions include A377, 383–384 (NY), S402, A420, and R437.

This sequence in the N-terminal section; belongs to the N-acetylglucosamine-1-phosphate uridyltransferase family. It in the C-terminal section; belongs to the transferase hexapeptide repeat family. As to quaternary structure, homotrimer. The cofactor is Mg(2+).

It localises to the cytoplasm. It catalyses the reaction alpha-D-glucosamine 1-phosphate + acetyl-CoA = N-acetyl-alpha-D-glucosamine 1-phosphate + CoA + H(+). The enzyme catalyses N-acetyl-alpha-D-glucosamine 1-phosphate + UTP + H(+) = UDP-N-acetyl-alpha-D-glucosamine + diphosphate. Its pathway is nucleotide-sugar biosynthesis; UDP-N-acetyl-alpha-D-glucosamine biosynthesis; N-acetyl-alpha-D-glucosamine 1-phosphate from alpha-D-glucosamine 6-phosphate (route II): step 2/2. It participates in nucleotide-sugar biosynthesis; UDP-N-acetyl-alpha-D-glucosamine biosynthesis; UDP-N-acetyl-alpha-D-glucosamine from N-acetyl-alpha-D-glucosamine 1-phosphate: step 1/1. It functions in the pathway bacterial outer membrane biogenesis; LPS lipid A biosynthesis. Catalyzes the last two sequential reactions in the de novo biosynthetic pathway for UDP-N-acetylglucosamine (UDP-GlcNAc). The C-terminal domain catalyzes the transfer of acetyl group from acetyl coenzyme A to glucosamine-1-phosphate (GlcN-1-P) to produce N-acetylglucosamine-1-phosphate (GlcNAc-1-P), which is converted into UDP-GlcNAc by the transfer of uridine 5-monophosphate (from uridine 5-triphosphate), a reaction catalyzed by the N-terminal domain. The chain is Bifunctional protein GlmU from Shewanella amazonensis (strain ATCC BAA-1098 / SB2B).